The chain runs to 367 residues: N-acetylmuramoyl-L-alanine amidase BlyA (367 aa).

One can recognise an N-acetylmuramoyl-L-alanine amidase domain in the interval 24–158 (VKKCVLHYTA…DITHKNCPAP (135 aa)). Residues 178 to 204 (SGKSVSKASPTKPTTSSPSSSSAVSGS) are disordered. The segment covering 180 to 204 (KSVSKASPTKPTTSSPSSSSAVSGS) has biased composition (low complexity). SH3b domains lie at 202–271 (SGSL…YVDV) and 298–367 (GKIK…GSTI).

This sequence belongs to the N-acetylmuramoyl-L-alanine amidase 2 family.

The protein resides in the secreted. It catalyses the reaction Hydrolyzes the link between N-acetylmuramoyl residues and L-amino acid residues in certain cell-wall glycopeptides.. In terms of biological role, autolysins are involved in some important biological processes such as cell separation, cell-wall turnover, competence for genetic transformation, formation of the flagella and sporulation. Involved in prophage SP-beta-mediated cell lysis. In Bacillus subtilis (strain 168), this protein is N-acetylmuramoyl-L-alanine amidase BlyA (blyA).